The sequence spans 196 residues: Large ribosomal subunit protein bL9 (196 aa).

Belongs to the bacterial ribosomal protein bL9 family.

In terms of biological role, binds to the 23S rRNA. This is Large ribosomal subunit protein bL9 from Gluconobacter oxydans (strain 621H) (Gluconobacter suboxydans).